Consider the following 1191-residue polypeptide: MPAMVPGWNHGNITRSKAEELLSRAGKDGSFLVRASESIPRAYALCVLFRNCVYTYRILPNEDDKFTVQASEGVPMRFFTKLDQLIDFYKKENMGLVTHLQYPVPLEEEDAIDEAEEDTVESVMSPPELPPRNIPMSAGPSEAKDLPLATENPRAPEVTRLSLSETLFQRLQSMDTSGLPEEHLKAIQDYLSTQLLLDSDFLKTGSSNLPHLKKLMSLLCKELHGEVIRTLPSLESLQRLFDQQLSPGLRPRPQVPGEASPITMVAKLSQLTSLLSSIEDKVKSLLHEGSESTNRRSLIPPVTFEVKSESLGIPQKMHLKVDVESGKLIVKKSKDGSEDKFYSHKKILQLIKSQKFLNKLVILVETEKEKILRKEYVFADSKKREGFCQLLQQMKNKHSEQPEPDMITIFIGTWNMGNAPPPKKITSWFLSKGQGKTRDDSADYIPHDIYVIGTQEDPLGEKEWLELLRHSLQEVTSMTFKTVAIHTLWNIRIVVLAKPEHENRISHICTDNVKTGIANTLGNKGAVGVSFMFNGTSLGFVNSHLTSGSEKKLRRNQNYMNILRFLALGDKKLSPFNITHRFTHLFWLGDLNYRVELPTWEAEAIIQKIKQQQYSDLLAHDQLLLERKDQKVFLHFEEEEITFAPTYRFERLTRDKYAYTKQKATGMKYNLPSWCDRVLWKSYPLVHVVCQSYGSTSDIMTSDHSPVFATFEAGVTSQFVSKNGPGTVDSQGQIEFLACYATLKTKSQTKFYLEFHSSCLESFVKSQEGENEEGSEGELVVRFGETLPKLKPIISDPEYLLDQHILISIKSSDSDESYGEGCIALRLETTEAQHPIYTPLTHHGEMTGHFRGEIKLQTSQGKMREKLYDFVKTERDESSGMKCLKNLTSHDPMRQWEPSGRVPACGVSSLNEMINPNYIGMGPFGQPLHGKSTLSPDQQLTAWSYDQLPKDSSLGPGRGEGPPTPPSQPPLSPKKFSSSTANRGPCPRVQEARPGDLGKVEALLQEDLLLTKPEMFENPLYGSVSSFPKLVPRKEQESPKMLRKEPPPCPDPGISSPSIVLPKAQEVESVKGTSKQAPVPVLGPTPRIRSFTCSSSAEGRMTSGDKSQGKPKASASSQAPVPVKRPVKPSRSEMSQQTTPIPAPRPPLPVKSPAVLQLQHSKGRDYRDNTELPHHGKHRQEEGLLGRTAMQ.

The SH2 domain maps to 8–104 (WNHGNITRSK…GLVTHLQYPV (97 aa)). A disordered region spans residues 122–148 (SVMSPPELPPRNIPMSAGPSEAKDLPL). An SH3-binding 1 motif is present at residues 127–132 (PELPPR). The residue at position 246 (serine 246) is a Phosphoserine. The NPXY motif 1 motif lies at 915 to 918 (NPNY). Phosphotyrosine is present on tyrosine 918. Residue serine 935 is modified to Phosphoserine. A Phosphotyrosine modification is found at tyrosine 945. Disordered regions lie at residues 947–994 (QLPK…EARP) and 1021–1191 (YGSV…TAMQ). The span at 962–972 (PPTPPSQPPLS) shows a compositional bias: pro residues. Position 964 is a phosphothreonine (threonine 964). 2 positions are modified to phosphoserine: serine 967 and serine 972. Positions 970 to 975 (PLSPKK) match the SH3-binding 2 motif. Positions 1015–1029 (MFENPLYGSVSSFPK) are interaction with DAB2. Residues 1018–1021 (NPLY) carry the NPXY motif 2 motif. Tyrosine 1021 is modified (phosphotyrosine). Positions 1032–1046 (PRKEQESPKMLRKEP) are enriched in basic and acidic residues. The SH3-binding 3 motif lies at 1039–1050 (PKMLRKEPPPCP). Over residues 1141–1150 (IPAPRPPLPV) the composition is skewed to pro residues. Over residues 1162-1184 (KGRDYRDNTELPHHGKHRQEEGL) the composition is skewed to basic and acidic residues.

The protein belongs to the inositol 1,4,5-trisphosphate 5-phosphatase family. In terms of assembly, interacts with tyrosine phosphorylated form of SHC1. Interacts with tyrosine phosphorylated form of DOK1. Interacts with tyrosine phosphorylated form of DOK3. Interacts with tyrosine phosphorylated form of SLAMF1/CD150. Interacts with PTPN11/SHP-2 in response to IL-3. Interacts with receptor EPOR. Interacts with receptors MS4A2/FCER1B and FCER1G. Interacts with receptors FCGR2B and FCGR3. Interacts with receptor FCGR2A, leading to regulate gene expression during the phagocytic process. Interacts with GRB2. Interacts with PLCG1. Interacts with tyrosine kinases SRC and TEC. Interacts with CRKL. Interacts with c-Met/MET. Interacts with MILR1 (tyrosine-phosphorylated). Isoform 5 interacts with IL6ST/gp130. Can weakly interact (via NPXY motif 2) with DAB2 (via PID domain); the interaction is impaired by tyrosine phosphorylation of the NPXY motif. Interacts (via SH2 domain) with tyrosine phosphorylated KLRC1 (via ITIM). Interacts with MPL/TPOR. Tyrosine phosphorylated by the members of the SRC family after exposure to a diverse array of extracellular stimuli such as cytokines, growth factors, antibodies, chemokines, integrin ligands and hypertonic and oxidative stress. Phosphorylated upon IgG receptor FCGR2B-binding. In terms of tissue distribution, specifically expressed in immune and hematopoietic cells. Levels vary considerably within this compartment. Lost during erythropoiesis when erythroid cells become Ter119+. Increases substantially with T-cell maturation and when resting B-cells are activated. Also present in mature granulocytes, monocyte/macrophages, mast cells and platelets. Isoform 5 is the only form expressed in embryonic stem (ES) cells and is coexpressed with other isoforms in hematopoietic stem cells, and disappears with differentiation.

Its subcellular location is the cytoplasm. The protein resides in the cell membrane. The protein localises to the membrane raft. It localises to the cytoskeleton. The catalysed reaction is a 1,2-diacyl-sn-glycero-3-phospho-(1D-myo-inositol-3,4,5-trisphosphate) + H2O = a 1,2-diacyl-sn-glycero-3-phospho-(1D-myo-inositol-3,4-bisphosphate) + phosphate. The enzyme catalyses a 1,2-diacyl-sn-glycero-3-phospho-(1D-myo-inositol-4,5-bisphosphate) + H2O = a 1,2-diacyl-sn-glycero-3-phospho-(1D-myo-inositol 4-phosphate) + phosphate. It carries out the reaction 1D-myo-inositol 1,3,4,5-tetrakisphosphate + H2O = 1D-myo-inositol 1,3,4-trisphosphate + phosphate. Its activity is regulated as follows. Activated upon translocation to the sites of synthesis of PtdIns(3,4,5)P3 in the membrane. In terms of biological role, phosphatidylinositol (PtdIns) phosphatase that specifically hydrolyzes the 5-phosphate of phosphatidylinositol-3,4,5-trisphosphate (PtdIns(3,4,5)P3) to produce PtdIns(3,4)P2, thereby negatively regulating the PI3K (phosphoinositide 3-kinase) pathways. Also able to hydrolyze the 5-phosphate of phosphatidylinositol-4,5-bisphosphate (PtdIns(4,5)P3) and inositol 1,3,4,5-tetrakisphosphate. Acts as a negative regulator of B-cell antigen receptor signaling. Mediates signaling from the FC-gamma-RIIB receptor (FCGR2B), playing a central role in terminating signal transduction from activating immune/hematopoietic cell receptor systems. Acts as a negative regulator of myeloid cell proliferation/survival and chemotaxis, mast cell degranulation, immune cells homeostasis, integrin alpha-IIb/beta-3 signaling in platelets and JNK signaling in B-cells. Regulates proliferation of osteoclast precursors, macrophage programming, phagocytosis and activation and is required for endotoxin tolerance. Involved in the control of cell-cell junctions, CD32a signaling in neutrophils and modulation of EGF-induced phospholipase C activity. Key regulator of neutrophil migration, by governing the formation of the leading edge and polarization required for chemotaxis. Modulates FCGR3/CD16-mediated cytotoxicity in NK cells. Mediates the activin/TGF-beta-induced apoptosis through its Smad-dependent expression. This Mus musculus (Mouse) protein is Phosphatidylinositol 3,4,5-trisphosphate 5-phosphatase 1 (Inpp5d).